The primary structure comprises 332 residues: Lipoyl synthase (332 aa).

The [4Fe-4S] cluster site is built by Cys74, Cys79, Cys85, Cys100, Cys104, Cys107, and Ser314. The 219-residue stretch at 85–303 (CFGKGTATFM…EEEAYKMGFT (219 aa)) folds into the Radical SAM core domain.

Belongs to the radical SAM superfamily. Lipoyl synthase family. [4Fe-4S] cluster serves as cofactor.

It localises to the cytoplasm. It carries out the reaction [[Fe-S] cluster scaffold protein carrying a second [4Fe-4S](2+) cluster] + N(6)-octanoyl-L-lysyl-[protein] + 2 oxidized [2Fe-2S]-[ferredoxin] + 2 S-adenosyl-L-methionine + 4 H(+) = [[Fe-S] cluster scaffold protein] + N(6)-[(R)-dihydrolipoyl]-L-lysyl-[protein] + 4 Fe(3+) + 2 hydrogen sulfide + 2 5'-deoxyadenosine + 2 L-methionine + 2 reduced [2Fe-2S]-[ferredoxin]. It functions in the pathway protein modification; protein lipoylation via endogenous pathway; protein N(6)-(lipoyl)lysine from octanoyl-[acyl-carrier-protein]: step 2/2. Its function is as follows. Catalyzes the radical-mediated insertion of two sulfur atoms into the C-6 and C-8 positions of the octanoyl moiety bound to the lipoyl domains of lipoate-dependent enzymes, thereby converting the octanoylated domains into lipoylated derivatives. In Paracidovorax citrulli (strain AAC00-1) (Acidovorax citrulli), this protein is Lipoyl synthase.